We begin with the raw amino-acid sequence, 298 residues long: N-acetylmuramic acid 6-phosphate etherase (298 aa).

One can recognise an SIS domain in the interval 55–218 (IHTQVSGGGR…STGLMIKSGK (164 aa)). Residue glutamate 83 is the Proton donor of the active site. Glutamate 114 is an active-site residue.

Belongs to the GCKR-like family. MurNAc-6-P etherase subfamily. Homodimer.

It catalyses the reaction N-acetyl-D-muramate 6-phosphate + H2O = N-acetyl-D-glucosamine 6-phosphate + (R)-lactate. Its pathway is amino-sugar metabolism; 1,6-anhydro-N-acetylmuramate degradation. The protein operates within amino-sugar metabolism; N-acetylmuramate degradation. It functions in the pathway cell wall biogenesis; peptidoglycan recycling. Functionally, specifically catalyzes the cleavage of the D-lactyl ether substituent of MurNAc 6-phosphate, producing GlcNAc 6-phosphate and D-lactate. Together with AnmK, is also required for the utilization of anhydro-N-acetylmuramic acid (anhMurNAc) either imported from the medium or derived from its own cell wall murein, and thus plays a role in cell wall recycling. This Escherichia coli O127:H6 (strain E2348/69 / EPEC) protein is N-acetylmuramic acid 6-phosphate etherase.